A 138-amino-acid polypeptide reads, in one-letter code: Protein FAM136A (138 aa).

It belongs to the FAM136 family.

This is Protein FAM136A (fam136a) from Xenopus tropicalis (Western clawed frog).